A 145-amino-acid polypeptide reads, in one-letter code: UPF0201 protein SSO1042 (145 aa).

The protein belongs to the UPF0201 family.

The polypeptide is UPF0201 protein SSO1042 (Saccharolobus solfataricus (strain ATCC 35092 / DSM 1617 / JCM 11322 / P2) (Sulfolobus solfataricus)).